Consider the following 74-residue polypeptide: Anaphase-promoting complex subunit 13 (74 aa).

The segment at 33 to 53 is disordered; that stretch reads LNELPEPEQDNGGTTESVKEQ.

Belongs to the APC13 family. In terms of assembly, the mammalian APC/C is composed at least of 14 distinct subunits ANAPC1, ANAPC2, CDC27/APC3, ANAPC4, ANAPC5, CDC16/APC6, ANAPC7, CDC23/APC8, ANAPC10, ANAPC11, CDC26/APC12, ANAPC13, ANAPC15 and ANAPC16 that assemble into a complex of at least 19 chains with a combined molecular mass of around 1.2 MDa; APC/C interacts with FZR1 and FBXO5.

The protein resides in the nucleus. The protein operates within protein modification; protein ubiquitination. Functionally, component of the anaphase promoting complex/cyclosome (APC/C), a cell cycle-regulated E3 ubiquitin ligase that controls progression through mitosis and the G1 phase of the cell cycle. The APC/C complex acts by mediating ubiquitination and subsequent degradation of target proteins: it mainly mediates the formation of 'Lys-11'-linked polyubiquitin chains and, to a lower extent, the formation of 'Lys-48'- and 'Lys-63'-linked polyubiquitin chains. The APC/C complex catalyzes assembly of branched 'Lys-11'-/'Lys-48'-linked branched ubiquitin chains on target proteins. In Bos taurus (Bovine), this protein is Anaphase-promoting complex subunit 13 (ANAPC13).